The chain runs to 124 residues: Replication restart protein PriB (124 aa).

The 101-residue stretch at 12-112 (IDNCLTLTGI…LHTEQIEFID (101 aa)) folds into the SSB domain.

This sequence belongs to the PriB family. Homodimer. Interacts with PriA and DnaT. Component of the replication restart primosome. Primosome assembly occurs via a 'hand-off' mechanism. PriA binds to replication forks, subsequently PriB then DnaT bind; DnaT then displaces ssDNA to generate the helicase loading substrate.

Functionally, involved in the restart of stalled replication forks, which reloads the replicative helicase on sites other than the origin of replication; the PriA-PriB pathway is the major replication restart pathway. During primosome assembly it facilitates complex formation between PriA and DnaT on DNA; stabilizes PriA on DNA. Stimulates the DNA unwinding activity of PriA helicase. This is Replication restart protein PriB from Haemophilus ducreyi (strain 35000HP / ATCC 700724).